We begin with the raw amino-acid sequence, 1638 residues long: DNA polymerase III PolC-type (1638 aa).

The interval 193 to 212 (SEIKKQRSEERESKNTREAK) is disordered. The segment covering 194 to 212 (EIKKQRSEERESKNTREAK) has biased composition (basic and acidic residues). In terms of domain architecture, Exonuclease spans 596-752 (YVVFDVETTG…FDAEATGRLL (157 aa)).

It belongs to the DNA polymerase type-C family. PolC subfamily.

It localises to the cytoplasm. The enzyme catalyses DNA(n) + a 2'-deoxyribonucleoside 5'-triphosphate = DNA(n+1) + diphosphate. Required for replicative DNA synthesis. This DNA polymerase also exhibits 3' to 5' exonuclease activity. This is DNA polymerase III PolC-type from Lactococcus lactis subsp. lactis (strain IL1403) (Streptococcus lactis).